A 606-amino-acid polypeptide reads, in one-letter code: NADH-ubiquinone oxidoreductase chain 5 (606 aa).

16 helical membrane passes run 1–21 (MNLF…PIMV), 35–55 (YVKN…MMYL), 87–107 (LMFM…SMWY), 114–134 (INQF…LVTA), 140–160 (LFIG…WWFG), 171–191 (AILY…WFLS), 211–233 (FPLM…HPWL), 241–261 (TPVS…FLLV), 272–292 (LIQT…AICA), 301–320 (IIAF…IGLN), 325–347 (AFLH…GSII), 366–386 (LPFT…MPFL), 413–433 (LTAT…ALLG), 457–477 (LLIG…PVIT), 482–502 (MPLH…IIAF), and 582–602 (GLIK…MILF).

It belongs to the complex I subunit 5 family. In terms of assembly, core subunit of respiratory chain NADH dehydrogenase (Complex I) which is composed of 45 different subunits.

Its subcellular location is the mitochondrion inner membrane. The enzyme catalyses a ubiquinone + NADH + 5 H(+)(in) = a ubiquinol + NAD(+) + 4 H(+)(out). Core subunit of the mitochondrial membrane respiratory chain NADH dehydrogenase (Complex I) which catalyzes electron transfer from NADH through the respiratory chain, using ubiquinone as an electron acceptor. Essential for the catalytic activity and assembly of complex I. In Balaenoptera musculus (Blue whale), this protein is NADH-ubiquinone oxidoreductase chain 5 (MT-ND5).